A 1609-amino-acid polypeptide reads, in one-letter code: MKIPHVTDPVSNMVGGMAQVVRASTHAATGAVNTMQMLASPVAEFAWPVVQSVAKSTGRALGTGHSPNFANRVDPPVRWHNGQRVHLDLDPLLPFPRWHEYAAVVEEPVRRIPGVAKGHVEGSLGRLVIELDKNADSDVVLGKVRDVVIALAADLALTGARSAPKVAPFADPGNPLAILMPLTAAVMDLVALSAAVTGWVTRLPAVPQTIRAAAALVNHQPRMVSLLESRLGRVGTDIALSITTAAASGLTQAVGTPLLDLACRGLQLSEAAAHQRVWRDREPQLASPKRPQAPVVPVISSAGEKSHAAGHNWTAAASNEASHLVVGGSIDAAIDTAKGSMKGPVESYVDSAANGSLIAAASALLAGGGTEDAAGAILAGVPRAAHMGQQAFAATLGRGLANAGQLVLDPGALRRLDQVKVVVIDGAALRGDHRAVLLARGNTPGWDDDRVYEVTDALLHGERAPEPDPDESPATGARLRWVPLQGPSATPVQGREHADLVVNGECVGGVDVGWEVDPYAIPLLQTAHRTGARVVLRHVAGTEDLSASVGATHPPGTPLLKLVRELRTDRGPVLLITAVHRDFASTDTLAALAIADVGVALDDPHAATPWTADIITGTDLAAAVRILSALPVARSASESSVHLAQGGTTLAGLLLITASAGSKSASPITLRRWFSPVNAAAATALVTGVVSASKVLRLPDPTPQPLTAWHALDPEIVYSRLAGVTQPLAVEPGTPDWRRRLDDLSYTRALSPLRKPVTKLARLASATRQEFADPLTPILAVGAAASAIVGSNIDALLVAGVMTVNAITGGVQRLRAEAAAAELFAEQDQLVRRVVVPAVATTRRRLEAAQHATRTVTVSAKSLRAGDVIDLAAPEVVPADARVLVAEDLEVDESLLTGESLPVDKRVDPVAINDADRASMLFEGSAIVAGHARAIVVATGVGTAAHRAISAVADVEVSAGVQARLRELTSKVLPLTLAGGAAVTGLALLRRASLRQAVADGVAIAVAAVPEGLPLVATLSQLAAAQRLTAKGALVRSPRTIEALGRVDTICFDKTGTLTENRLRVVCAVPNTRMPHDPLPDITDPHSAAVLRDAARASTQPHDGQGHTHATDEAILTAASSLNSHTDSTWSLIAEVPFESSRGYAAAIGITGNGKAPMLMLKGAPEKILPRCRFADPEADVAHAESLVRHLAEQGLRVLAVAQCSWGHDTTDDNDTDADAVDAAAHDLELVGYIGLADTARPSSRPLIEALVTAGRNVVLITGDHPITARAIAQQLGLRSDARVVNGTELIGLDEDACAELAADVQVFARVSPEQKVQIVAALQRCGQVTAMVGDGANDAAAIRMADVGIGVSGRGSSAARGAADIVLTDDDLGVLLDALVEGRSMWAGVRDAVTILVGGNVGEVVFTIIGTVFGAGRAPVGTRQLLLVNLLTDMFPALSIAVTSQYEEPGEDEYQTDEEADEARRTHQHEVLTGPTPSLDAPLMRQIVNRGVVTAAGATTAWAIGRWTPGTERRTATMGLTALVTTQLAQTLLTRRHSPLVVATALGSAGVLIGIIQTPVISQFFGCTPLGPIAWSGVITATAGATAVSVLAPQWLNKAFGIAQLNQE.

The next 10 membrane-spanning stretches (helical) occupy residues 30-50 (GAVN…WPVV), 176-196 (LAIL…SAAV), 238-258 (IALS…GTPL), 357-377 (LIAA…AGAI), 641-661 (VHLA…ASAG), 673-693 (WFSP…VSAS), 778-798 (ILAV…ALLV), 921-941 (LFEG…ATGV), 969-989 (TSKV…LALL), and 997-1017 (AVAD…PLVA). Asp1053 acts as the 4-aspartylphosphate intermediate in catalysis. Positions 1335 and 1339 each coordinate Mg(2+). 2 helical membrane-spanning segments follow: residues 1396-1416 (ILVG…VFGA) and 1426-1446 (LLLV…VTSQ). The segment at 1447 to 1476 (YEEPGEDEYQTDEEADEARRTHQHEVLTGP) is disordered. Residues 1449-1462 (EPGEDEYQTDEEAD) show a composition bias toward acidic residues. 2 helical membrane passes run 1542–1562 (VVAT…TPVI) and 1573–1593 (PIAW…SVLA).

This sequence belongs to the cation transport ATPase (P-type) (TC 3.A.3) family.

The protein resides in the cell membrane. The catalysed reaction is ATP + H2O = ADP + phosphate + H(+). The protein is Probable cation-transporting ATPase I (ctpI) of Mycobacterium leprae (strain TN).